The primary structure comprises 179 residues: Adenine phosphoribosyltransferase (179 aa).

The protein belongs to the purine/pyrimidine phosphoribosyltransferase family. In terms of assembly, homodimer.

The protein localises to the cytoplasm. It catalyses the reaction AMP + diphosphate = 5-phospho-alpha-D-ribose 1-diphosphate + adenine. The protein operates within purine metabolism; AMP biosynthesis via salvage pathway; AMP from adenine: step 1/1. Its function is as follows. Catalyzes a salvage reaction resulting in the formation of AMP, that is energically less costly than de novo synthesis. This is Adenine phosphoribosyltransferase from Bradyrhizobium sp. (strain BTAi1 / ATCC BAA-1182).